Consider the following 1174-residue polypeptide: Creatine kinase, flagellar (1174 aa).

The span at 1–14 (MGCAASSQQTTATG) shows a compositional bias: polar residues. The segment at 1–62 (MGCAASSQQT…PFVEPDPNYP (62 aa)) is disordered. The span at 18-39 (AAGEKANPAPANNNPNAANKAE) shows a compositional bias: low complexity. The Phosphagen kinase N-terminal 1 domain occupies 53–139 (PFVEPDPNYP…FDPTIDKRHN (87 aa)). One copy of the 1; approximate repeat lies at 61-414 (YPDLSKHNNY…EKALEKGSDI (354 aa)). The region spanning 166-408 (YVLSCRVRTG…KKLIELEKAL (243 aa)) is the Phosphagen kinase C-terminal 1 domain. ATP contacts are provided by residues 169–173 (SCRVR), histidine 232, arginine 277, and 333–337 (RAGVH). The Phosphagen kinase N-terminal 2 domain occupies 426-512 (RAEQVKEGYP…FDPVIDARHG (87 aa)). The stretch at 434 to 787 (YPDLSKHNNH…EKKLEKGEDI (354 aa)) is one 2; approximate repeat. The 243-residue stretch at 539-781 (YVLSCRVRTG…ELLVQMEKKL (243 aa)) folds into the Phosphagen kinase C-terminal 2 domain. Residues 542 to 546 (SCRVR), histidine 605, arginine 706, 734 to 739 (RGTGGV), and aspartate 749 each bind ATP. A Phosphagen kinase N-terminal 3 domain is found at 800–886 (PIKPFSYDYP…FDPVISARHG (87 aa)). One copy of the 3; approximate repeat lies at 808 to 1161 (YPDFSLHNNW…EKALMKGEDI (354 aa)). The Phosphagen kinase C-terminal 3 domain maps to 913 to 1155 (FVLSCRVRTG…KLLVNLEKAL (243 aa)).

Belongs to the ATP:guanido phosphotransferase family. In terms of assembly, monomer.

Its subcellular location is the cytoplasm. The protein localises to the cytoskeleton. The protein resides in the flagellum axoneme. It catalyses the reaction creatine + ATP = N-phosphocreatine + ADP + H(+). Its function is as follows. This axonemal protein participates in an energy shuttle that utilizes phosphocreatine to transfer the energy from ATP generated by the mitochondrion in the sperm head to dynein in the distal portions of the flagellum. This Strongylocentrotus purpuratus (Purple sea urchin) protein is Creatine kinase, flagellar.